A 692-amino-acid polypeptide reads, in one-letter code: MARQVSLEKTRNIGIMAHIDAGKTTTTERVLYYTGVSHKIGEVHDGAATMDWMEQEQERGITITSAATTCFWRDHRVNIIDTPGHVDFTVEVERSLRVLDGSVAVFCSVGGVEPQSETVWRQADKYRVPRIAFINKMDRIGADFDRGVNMIRERLGANAIPLQLPIGKEDNFSGVVDLVEMKAIVWDDESLGARFEVVDIPADLQERVDSGRELLVEEVCTHDEALMDKYLGGEEITLEELKNGIRKACIDIKIIPVLCGSAFKNKGVQNLLDAVIDYMPSPVDVPAITGVVPDTEEEITRPAGDDGPFAALAFKVMTDPFVGQLTFFRVYSGVAESGATVLNATRDKKERFGRLLKMHANKREEIKQVYSGDIAAAVGLKLTTTGDTLCDPANPCLLESMEFPEPVIHIAIEPKTKGDMDKMGQALGKLVQEDPTLRVRTDEETGQTILSGMGELHLEIIIDRLQREFKVDANVGAPQVAYRETITKAVEVQGKFVRQSGGRGQYGDCWLKLEPQEPGAGYEFVDAIKGGVIPREYIPAVGKGAEEAAENGVVAGFPIVDVKVTCYDGSYHDVDSSEMAFKIAGSMGFKAGAAKASPVLLEPVMAVEVVVPEEYMGDVMGDLSSRRGRVLGMDARGGAQVINSNVPLASMFGYATELRSMTQGRATYTMVFDHYEQVPKAISEEIVARVKG.

Residues 8–283 (EKTRNIGIMA…AVIDYMPSPV (276 aa)) form the tr-type G domain. GTP-binding positions include 17-24 (AHIDAGKT), 81-85 (DTPGH), and 135-138 (NKMD).

The protein belongs to the TRAFAC class translation factor GTPase superfamily. Classic translation factor GTPase family. EF-G/EF-2 subfamily.

It is found in the cytoplasm. In terms of biological role, catalyzes the GTP-dependent ribosomal translocation step during translation elongation. During this step, the ribosome changes from the pre-translocational (PRE) to the post-translocational (POST) state as the newly formed A-site-bound peptidyl-tRNA and P-site-bound deacylated tRNA move to the P and E sites, respectively. Catalyzes the coordinated movement of the two tRNA molecules, the mRNA and conformational changes in the ribosome. The chain is Elongation factor G 2 from Syntrophotalea carbinolica (strain DSM 2380 / NBRC 103641 / GraBd1) (Pelobacter carbinolicus).